A 118-amino-acid chain; its full sequence is Large ribosomal subunit protein uL18 (118 aa).

Residues 1 to 24 (MITKPDKNKIRQKRHRRVRGKLSG) are disordered. A compositionally biased stretch (basic residues) spans 10–20 (IRQKRHRRVRG).

The protein belongs to the universal ribosomal protein uL18 family. In terms of assembly, part of the 50S ribosomal subunit; part of the 5S rRNA/L5/L18/L25 subcomplex. Contacts the 5S and 23S rRNAs.

In terms of biological role, this is one of the proteins that bind and probably mediate the attachment of the 5S RNA into the large ribosomal subunit, where it forms part of the central protuberance. This chain is Large ribosomal subunit protein uL18, found in Streptococcus sanguinis (strain SK36).